Here is a 79-residue protein sequence, read N- to C-terminus: Cytochrome b (79 aa).

The next 3 helical transmembrane spans lie at 1 to 7 (TAMFLAM), 31 to 52 (WLIR…YLHI), and 67 to 79 (WNVG…LTMM). Positions 37 and 51 each coordinate heme b.

It belongs to the cytochrome b family. As to quaternary structure, the cytochrome bc1 complex contains 3 respiratory subunits (MT-CYB, CYC1 and UQCRFS1), 2 core proteins (UQCRC1 and UQCRC2) and probably 6 low-molecular weight proteins. Heme b serves as cofactor.

It is found in the mitochondrion inner membrane. Functionally, component of the ubiquinol-cytochrome c reductase complex (complex III or cytochrome b-c1 complex) that is part of the mitochondrial respiratory chain. The b-c1 complex mediates electron transfer from ubiquinol to cytochrome c. Contributes to the generation of a proton gradient across the mitochondrial membrane that is then used for ATP synthesis. The sequence is that of Cytochrome b (mt-cyb) from Hypsophrys nicaraguensis (Moga).